Reading from the N-terminus, the 373-residue chain is Sensor protein DegM (373 aa).

4 helical membrane passes run 27–47 (ILLAFLYGGKRAGWGVAAIAV), 57–77 (LFLLGVVLIVLTALFYALCVN), 91–111 (YASLLVILPATIQTFGTLYLI), and 122–142 (VAGWLYIVFLVVTVVLVTYLF). The region spanning 170–370 (SIAHEVRNPL…KVVLSLPIEK (201 aa)) is the Histidine kinase domain. Histidine 173 carries the phosphohistidine; by autocatalysis modification.

The protein localises to the cell membrane. It carries out the reaction ATP + protein L-histidine = ADP + protein N-phospho-L-histidine.. Involved in a sensory transduction pathway that enhances the production of minor proteases. The chain is Sensor protein DegM (degM) from Bacillus sp. (strain B21-2).